The sequence spans 74 residues: Large ribosomal subunit protein bL31 (74 aa).

The Zn(2+) site is built by Cys-16, Cys-18, Cys-38, and Cys-41.

This sequence belongs to the bacterial ribosomal protein bL31 family. Type A subfamily. As to quaternary structure, part of the 50S ribosomal subunit. It depends on Zn(2+) as a cofactor.

Its function is as follows. Binds the 23S rRNA. The sequence is that of Large ribosomal subunit protein bL31 from Salinispora arenicola (strain CNS-205).